Here is a 238-residue protein sequence, read N- to C-terminus: Lipoarabinomannan carrier protein LprG (238 aa).

A signal peptide spans 1 to 26 (MQAPKHHRRLFAVLATLNTATAVIAG). Cys-27 carries N-palmitoyl cysteine lipidation. Residue Cys-27 is the site of S-diacylglycerol cysteine attachment.

It belongs to the LppX/LprAFG lipoprotein family. Modified by Lgt on Cys-27 with an S-linked diacylglyceral, signal peptide is removed by LspA, Cys-27 is further modifed with a fatty acid on its amino group by Lnt yielding a triacylated protein. Probably glycosylated, which is required for T-cell activation.

The protein localises to the cell inner membrane. Its subcellular location is the secreted. The protein resides in the cell wall. Functionally, helps membrane protein ML0556 (P55) transport triacylglycerides (TAG) across the inner cell membrane into the periplasm and probably ultimately to the outer membrane. Binds TAG in its hydrophobic cavity and transfers it between lipid bilayers. TAG probably regulates lipid metabolism and growth regulation and plays a structural role in the outer membrane. Binds di- and triacylated phosphatidyl-myo-inositol mannosides (PIMs), and glycolipid lipoglycan modulins lipoarabinomannan (LAM) and lipomannan (LM), facilitating their recognition by TLR2. Required for activity of drug efflux transporter ML0556. Required, probably with ML0556, for normal surface localization of LAM. Constitutes a host TLR2 agonist (toll-like receptor) able to stimulate proliferation of CD4+ T-cells derived from a human leprosy patient following protein processing/presentation by MHC class II molecules in peripheral blood mononuclear cells. In Mycobacterium leprae (strain TN), this protein is Lipoarabinomannan carrier protein LprG.